We begin with the raw amino-acid sequence, 233 residues long: Large ribosomal subunit protein eL6y (233 aa).

The segment covering 48–72 (HDAKSKVDAPVEKPPKFYPAEDVKK) has biased composition (basic and acidic residues). A disordered region spans residues 48–82 (HDAKSKVDAPVEKPPKFYPAEDVKKPLPNRRTAKP).

It belongs to the eukaryotic ribosomal protein eL6 family.

The sequence is that of Large ribosomal subunit protein eL6y (RPL6B) from Arabidopsis thaliana (Mouse-ear cress).